Here is a 396-residue protein sequence, read N- to C-terminus: Deoxyguanosinetriphosphate triphosphohydrolase-like protein (396 aa).

The HD domain maps to 69–211; that stretch reads RLSHSLEVSQ…AALADDIAYN (143 aa).

The protein belongs to the dGTPase family. Type 2 subfamily.

This is Deoxyguanosinetriphosphate triphosphohydrolase-like protein from Parvibaculum lavamentivorans (strain DS-1 / DSM 13023 / NCIMB 13966).